The sequence spans 285 residues: MARCO-like protein (285 aa).

The signal sequence occupies residues 1-20; the sequence is MRAFIFFLFMLLAMFSASST. Residue Asn24 is glycosylated (N-linked (GlcNAc...) asparagine). 2 disordered regions span residues 47–77 and 91–285; these read NHLG…GQPG and GRAG…QGNL. Composition is skewed to polar residues over residues 57-67 and 105-114; these read KQGGSYTQGNP and SGKSNQKGNP. Positions 115–128 are enriched in low complexity; the sequence is ESSNKQENSGSSSQ. Residues 134–145 are compositionally biased toward polar residues; the sequence is ISTQQGNPGSSD. Low complexity predominate over residues 160 to 173; sequence GSSSQQGKPGSSSQ. Positions 174–185 are enriched in polar residues; the sequence is HGNLGSSTQKGN. Residues 186 to 220 are compositionally biased toward low complexity; that stretch reads LGSSSLQGHLGLSSHQGKPESSGQQGKPGSSSQQG. Residues 221-285 show a composition bias toward polar residues; sequence NLGTSGQQEK…PGSSSRQGNL (65 aa).

This chain is MARCO-like protein, found in Homo sapiens (Human).